The following is a 203-amino-acid chain: Thymidylate kinase (203 aa).

10 to 17 (GIDGSGKS) lines the ATP pocket.

The protein belongs to the thymidylate kinase family.

It carries out the reaction dTMP + ATP = dTDP + ADP. Its function is as follows. Phosphorylation of dTMP to form dTDP in both de novo and salvage pathways of dTTP synthesis. This is Thymidylate kinase from Brachyspira hyodysenteriae (strain ATCC 49526 / WA1).